A 382-amino-acid polypeptide reads, in one-letter code: MRLHEHQAKQIFAKHGIRVPRGEVATSPEEAEKIAEKLGGRVVVKAQILVGGRGKAGGVKKANSPEEAKEVAKKILGMTIKGHRVEKVLVEEQLNMRKEYYVGYVVDKSSRLPTVIFSRMGGMDVEEIAAKHPDAIHRIYFDPLWGLKDYEVRKALFRAGFEGEEFKQMFDIIKKLVDIAFAYEAELTEINPLAVTDEGFLAADARLNTDDNALYRHPELAELREATEEDPLEREARLKGINYVHLGGNVGVIANGAGLAMATMDIINLMGGKPANFLDTGGGLADPVKMKNCLLHVLKDPNVRVVFINIYAEITRCEKVAEGIILALDEAPRKVPLVVKLAGTNEEIGREMLERYSSEKGAEIHFVESIEEGARKAVELAG.

Positions 9–235 constitute an ATP-grasp domain; sequence KQIFAKHGIR…ATEEDPLERE (227 aa). ATP is bound by residues K45, 52–54, E91, L94, and E99; that span reads GRG. The Mg(2+) site is built by N191 and D204. N255 lines the substrate pocket.

Belongs to the succinate/malate CoA ligase beta subunit family. Heterotetramer of two alpha and two beta subunits. It depends on Mg(2+) as a cofactor.

The enzyme catalyses succinate + ATP + CoA = succinyl-CoA + ADP + phosphate. It carries out the reaction GTP + succinate + CoA = succinyl-CoA + GDP + phosphate. Its pathway is carbohydrate metabolism; tricarboxylic acid cycle; succinate from succinyl-CoA (ligase route): step 1/1. Functionally, succinyl-CoA synthetase functions in the citric acid cycle (TCA), coupling the hydrolysis of succinyl-CoA to the synthesis of either ATP or GTP and thus represents the only step of substrate-level phosphorylation in the TCA. The beta subunit provides nucleotide specificity of the enzyme and binds the substrate succinate, while the binding sites for coenzyme A and phosphate are found in the alpha subunit. The protein is Succinate--CoA ligase [ADP-forming] subunit beta 1 of Archaeoglobus fulgidus (strain ATCC 49558 / DSM 4304 / JCM 9628 / NBRC 100126 / VC-16).